A 348-amino-acid chain; its full sequence is Ferrochelatase (348 aa).

Positions 218 and 299 each coordinate Fe cation.

Belongs to the ferrochelatase family.

It localises to the cytoplasm. The enzyme catalyses heme b + 2 H(+) = protoporphyrin IX + Fe(2+). It participates in porphyrin-containing compound metabolism; protoheme biosynthesis; protoheme from protoporphyrin-IX: step 1/1. Catalyzes the ferrous insertion into protoporphyrin IX. In Methylocella silvestris (strain DSM 15510 / CIP 108128 / LMG 27833 / NCIMB 13906 / BL2), this protein is Ferrochelatase.